Reading from the N-terminus, the 88-residue chain is UPF0298 protein BcerKBAB4_3759 (88 aa).

This sequence belongs to the UPF0298 family.

It localises to the cytoplasm. This is UPF0298 protein BcerKBAB4_3759 from Bacillus mycoides (strain KBAB4) (Bacillus weihenstephanensis).